We begin with the raw amino-acid sequence, 193 residues long: Ion-translocating oxidoreductase complex subunit A (193 aa).

Helical transmembrane passes span 5–25 (LLLLVSTVLINNFVLVKFLGL), 39–59 (VGMGLATTFVMTLASASSYLM), 63–83 (ILIPLNIAYLRTLAFILVIAV), 102–122 (LLGIFLPLITTNCAVLGVALL), 134–154 (IIYGFGAAAGFSLVLILFAAM), and 171–191 (SIAMVTAGLMSLAFMGFTGLI).

Belongs to the NqrDE/RnfAE family. In terms of assembly, the complex is composed of six subunits: RnfA, RnfB, RnfC, RnfD, RnfE and RnfG.

It is found in the cell inner membrane. Its function is as follows. Part of a membrane-bound complex that couples electron transfer with translocation of ions across the membrane. The sequence is that of Ion-translocating oxidoreductase complex subunit A from Aeromonas salmonicida (strain A449).